A 432-amino-acid chain; its full sequence is Putative D-alanyl-D-alanine carboxypeptidase (432 aa).

The helical; Signal-anchor transmembrane segment at 7-25 (ATVLLTFSLSAFAVEYPVL) threads the bilayer.

The protein belongs to the peptidase S12 family. YfeW subfamily.

The protein localises to the cell inner membrane. It carries out the reaction Preferential cleavage: (Ac)2-L-Lys-D-Ala-|-D-Ala. Also transpeptidation of peptidyl-alanyl moieties that are N-acyl substituents of D-alanine.. The polypeptide is Putative D-alanyl-D-alanine carboxypeptidase (Salmonella choleraesuis (strain SC-B67)).